The primary structure comprises 936 residues: 2-oxoglutarate dehydrogenase E1 component (936 aa).

It belongs to the alpha-ketoglutarate dehydrogenase family. Homodimer. Part of the 2-oxoglutarate dehydrogenase (OGDH) complex composed of E1 (2-oxoglutarate dehydrogenase), E2 (dihydrolipoamide succinyltransferase) and E3 (dihydrolipoamide dehydrogenase); the complex contains multiple copies of the three enzymatic components (E1, E2 and E3). Thiamine diphosphate is required as a cofactor.

It catalyses the reaction N(6)-[(R)-lipoyl]-L-lysyl-[protein] + 2-oxoglutarate + H(+) = N(6)-[(R)-S(8)-succinyldihydrolipoyl]-L-lysyl-[protein] + CO2. E1 component of the 2-oxoglutarate dehydrogenase (OGDH) complex which catalyzes the decarboxylation of 2-oxoglutarate, the first step in the conversion of 2-oxoglutarate to succinyl-CoA and CO(2). In Rickettsia prowazekii (strain Madrid E), this protein is 2-oxoglutarate dehydrogenase E1 component (sucA).